A 525-amino-acid polypeptide reads, in one-letter code: AP-4 complex accessory subunit Tepsin (525 aa).

An ENTH domain is found at 8 to 141; that stretch reads RDRLSFLHRL…FSDTVLPLAP (134 aa). The interval 139-229 is disordered; the sequence is LAPSQPLGTP…SHSGASREPG (91 aa). Over residues 193–225 the composition is skewed to low complexity; that stretch reads SGPSSQNSSQNSDLSRVSDSGSHSGSDSHSGAS. A phosphoserine mark is found at Ser333 and Ser356. Positions 355–465 are disordered; it reads LSPARGTSAE…PKRGPSSCAW (111 aa). The span at 393–412 shows a compositional bias: low complexity; that stretch reads PLSSTPVSSRSPAPSSGMPS. Positions 413–429 are enriched in pro residues; sequence SPVPTPPPDASPIPAPG. Residues 434–448 are compositionally biased toward basic and acidic residues; the sequence is AEARLAESRRWRPER. Residues 467-477 are interaction with AP4B1; the sequence is RDSLFAGMELV. Positions 487-525 are disordered; it reads AAAGESCPDAPRAPQTSSQRTAAKEPPGSEPSAFAFLNA. The interval 515–525 is interaction with AP4E1; it reads SEPSAFAFLNA.

As to quaternary structure, interacts with AP4B1 and AP4E1; the interaction is direct and mediates the association of TEPSIN with the adapter-like complex 4 (AP-4), a heterotetramer composed of AP4B1, AP4E1, AP4M1 and AP4S1.

The protein localises to the golgi apparatus. It is found in the trans-Golgi network membrane. Its subcellular location is the cytoplasmic vesicle. The protein resides in the cytoplasm. It localises to the cytosol. Its function is as follows. Associates with the adapter-like complex 4 (AP-4) and may therefore play a role in vesicular trafficking of proteins at the trans-Golgi network. This Homo sapiens (Human) protein is AP-4 complex accessory subunit Tepsin.